A 402-amino-acid polypeptide reads, in one-letter code: Metacaspase-1 (402 aa).

The segment at 1-79 (MAYPGQGGHH…FAPPSGPIGP (79 aa)) is disordered. Low complexity predominate over residues 23–45 (PAPHGYAQPGYGYAPPSGPPQGY). Active-site residues include His-193 and Cys-249.

The protein belongs to the peptidase C14B family.

Functionally, involved in cell death (apoptosis). The protein is Metacaspase-1 (MCA1) of Mycosarcoma maydis (Corn smut fungus).